Here is a 318-residue protein sequence, read N- to C-terminus: Malate dehydrogenase (318 aa).

Residues 10 to 15 (GGGQIG) and Asp-34 contribute to the NAD(+) site. Arg-83 and Arg-89 together coordinate substrate. Residues Asn-96 and 119 to 121 (ISN) contribute to the NAD(+) site. Residues Asn-121 and Arg-152 each coordinate substrate. Residue His-176 is the Proton acceptor of the active site.

The protein belongs to the LDH/MDH superfamily. MDH type 3 family.

It carries out the reaction (S)-malate + NAD(+) = oxaloacetate + NADH + H(+). In terms of biological role, catalyzes the reversible oxidation of malate to oxaloacetate. This Geotalea uraniireducens (strain Rf4) (Geobacter uraniireducens) protein is Malate dehydrogenase.